Consider the following 389-residue polypeptide: 1-deoxy-D-xylulose 5-phosphate reductoisomerase (389 aa).

Positions 11, 12, 13, 14, 39, and 122 each coordinate NADPH. Residue Lys-123 coordinates 1-deoxy-D-xylulose 5-phosphate. Glu-124 contributes to the NADPH binding site. Asp-148 provides a ligand contact to Mn(2+). 1-deoxy-D-xylulose 5-phosphate is bound by residues Ser-149, Glu-150, Ser-174, and His-197. Glu-150 serves as a coordination point for Mn(2+). NADPH is bound at residue Gly-203. Positions 210, 215, 216, and 219 each coordinate 1-deoxy-D-xylulose 5-phosphate. Glu-219 contacts Mn(2+).

It belongs to the DXR family. Requires Mg(2+) as cofactor. Mn(2+) is required as a cofactor.

The catalysed reaction is 2-C-methyl-D-erythritol 4-phosphate + NADP(+) = 1-deoxy-D-xylulose 5-phosphate + NADPH + H(+). The protein operates within isoprenoid biosynthesis; isopentenyl diphosphate biosynthesis via DXP pathway; isopentenyl diphosphate from 1-deoxy-D-xylulose 5-phosphate: step 1/6. In terms of biological role, catalyzes the NADPH-dependent rearrangement and reduction of 1-deoxy-D-xylulose-5-phosphate (DXP) to 2-C-methyl-D-erythritol 4-phosphate (MEP). The sequence is that of 1-deoxy-D-xylulose 5-phosphate reductoisomerase from Leptospira interrogans serogroup Icterohaemorrhagiae serovar copenhageni (strain Fiocruz L1-130).